The following is a 563-amino-acid chain: Ribulokinase (563 aa).

It belongs to the ribulokinase family.

The enzyme catalyses D-ribulose + ATP = D-ribulose 5-phosphate + ADP + H(+). It catalyses the reaction L-ribulose + ATP = L-ribulose 5-phosphate + ADP + H(+). It participates in carbohydrate degradation; L-arabinose degradation via L-ribulose; D-xylulose 5-phosphate from L-arabinose (bacterial route): step 2/3. The protein is Ribulokinase of Mycolicibacterium smegmatis (Mycobacterium smegmatis).